The sequence spans 345 residues: Protein RecA (345 aa).

Gly65 to Thr72 contacts ATP. A compositionally biased stretch (basic and acidic residues) spans Glu326–Glu336. The disordered stretch occupies residues Glu326–Glu345.

It belongs to the RecA family.

It localises to the cytoplasm. Can catalyze the hydrolysis of ATP in the presence of single-stranded DNA, the ATP-dependent uptake of single-stranded DNA by duplex DNA, and the ATP-dependent hybridization of homologous single-stranded DNAs. It interacts with LexA causing its activation and leading to its autocatalytic cleavage. The protein is Protein RecA of Stenotrophomonas maltophilia (strain K279a).